The chain runs to 218 residues: Ribonuclease HII (218 aa).

An RNase H type-2 domain is found at 23–216; it reads RFLCGVDEAG…VREAIARGLV (194 aa). Residues aspartate 29, glutamate 30, and aspartate 125 each coordinate a divalent metal cation.

This sequence belongs to the RNase HII family. The cofactor is Mn(2+). Mg(2+) is required as a cofactor.

It localises to the cytoplasm. It catalyses the reaction Endonucleolytic cleavage to 5'-phosphomonoester.. Its function is as follows. Endonuclease that specifically degrades the RNA of RNA-DNA hybrids. In Cupriavidus pinatubonensis (strain JMP 134 / LMG 1197) (Cupriavidus necator (strain JMP 134)), this protein is Ribonuclease HII.